The sequence spans 66 residues: Large ribosomal subunit protein bL35 (66 aa).

2 stretches are compositionally biased toward basic residues: residues 1–15 and 28–45; these read MPKLKTKSSAKKRFK and TKRHGMTKRSKRSLRTRR. The tract at residues 1–49 is disordered; sequence MPKLKTKSSAKKRFKVTASGRVMSAQSTKRHGMTKRSKRSLRTRRGIAQ.

This sequence belongs to the bacterial ribosomal protein bL35 family.

This chain is Large ribosomal subunit protein bL35, found in Anaplasma marginale (strain Florida).